Consider the following 236-residue polypeptide: Sperm flagellar protein 1 (236 aa).

Residues 7–112 (EEALHQLYLW…VLIPLRQRLE (106 aa)) form the Calponin-homology (CH) domain. Residues 115–176 (QRRRKQGAGS…PRPPAYNRAL (62 aa)) are disordered. An essential for homodimerization and microtubule bundling activity region spans residues 183–236 (VLQIAEKEQELLASQETVQVLQMKVRRLEHLLQLKNVRIEDLSRRLQQAERKQR).

As to quaternary structure, homodimer. Interacts with actin, TJP1, CGN and CDH1. As to expression, expressed in the intestinal epithelial cells (at protein level).

Its subcellular location is the cytoplasm. The protein localises to the cell projection. It is found in the cilium. The protein resides in the flagellum. It localises to the cytoskeleton. Its subcellular location is the cilium axoneme. The protein localises to the apical cell membrane. It is found in the basolateral cell membrane. The protein resides in the stress fiber. It localises to the microvillus. Its subcellular location is the lamellipodium. The protein localises to the filopodium. Its function is as follows. Microtubule-associated protein involved in the stabilization of microtubules along the axis of migration during radial intercalation. Promotes the establishment and stabilization of an axis of microtubules required for the active migration of cells into the outer epithelium. Microtubule-associated protein that promotes microtubule bundling and stabilizes microtubules against depolymerization in response to cold shock. Essential for ciliary central apparatus formation which requires both its microtubule-binding and bundling activities and for ciliary localization of HYDIN and SPAG6 in ependymal cilia. Binds actin in intestinal epithelial cells (IECs), essential for IECs survival and contributes to formation of filopodia and lamellipodia in migrating IECs. Regulates planar cell polarity signaling pathway and asymmetric microtubule accumulation in ciliated epithelia. The polypeptide is Sperm flagellar protein 1 (SPEF1) (Homo sapiens (Human)).